A 128-amino-acid polypeptide reads, in one-letter code: Small ribosomal subunit protein uS11 (128 aa).

This sequence belongs to the universal ribosomal protein uS11 family. Part of the 30S ribosomal subunit. Interacts with proteins S7 and S18. Binds to IF-3.

Functionally, located on the platform of the 30S subunit, it bridges several disparate RNA helices of the 16S rRNA. Forms part of the Shine-Dalgarno cleft in the 70S ribosome. The sequence is that of Small ribosomal subunit protein uS11 from Leuconostoc mesenteroides subsp. mesenteroides (strain ATCC 8293 / DSM 20343 / BCRC 11652 / CCM 1803 / JCM 6124 / NCDO 523 / NBRC 100496 / NCIMB 8023 / NCTC 12954 / NRRL B-1118 / 37Y).